We begin with the raw amino-acid sequence, 301 residues long: Sulfate adenylyltransferase subunit 2 (301 aa).

This sequence belongs to the PAPS reductase family. CysD subfamily. As to quaternary structure, heterodimer composed of CysD, the smaller subunit, and CysN.

The catalysed reaction is sulfate + ATP + H(+) = adenosine 5'-phosphosulfate + diphosphate. It participates in sulfur metabolism; hydrogen sulfide biosynthesis; sulfite from sulfate: step 1/3. Its function is as follows. With CysN forms the ATP sulfurylase (ATPS) that catalyzes the adenylation of sulfate producing adenosine 5'-phosphosulfate (APS) and diphosphate, the first enzymatic step in sulfur assimilation pathway. APS synthesis involves the formation of a high-energy phosphoric-sulfuric acid anhydride bond driven by GTP hydrolysis by CysN coupled to ATP hydrolysis by CysD. This is Sulfate adenylyltransferase subunit 2 from Citrifermentans bemidjiense (strain ATCC BAA-1014 / DSM 16622 / JCM 12645 / Bem) (Geobacter bemidjiensis).